A 480-amino-acid chain; its full sequence is Gasdermin-C2 (480 aa).

The interval 1 to 226 (MGYSFDRASK…TCVILPSATK (226 aa)) is triggers pyroptosis.

This sequence belongs to the gasdermin family. Homooligomer; homooligomeric ring-shaped pore complex containing 27-28 subunits when inserted in the membrane. In terms of processing, cleavage by CASP8 relieves autoinhibition by releasing the N-terminal moiety (Gasdermin-C2, N-terminal) that initiates pyroptosis. Post-translationally, palmitoylated.

The protein localises to the cytoplasm. It is found in the cytosol. Its subcellular location is the cell membrane. The full-length protein before cleavage is inactive: intramolecular interactions between N- and C-terminal domains mediate autoinhibition in the absence of activation signal. The intrinsic pyroptosis-inducing activity is carried by the released N-terminal moiety (Gasdermin-C2, N-terminal) following cleavage by caspase CASP8 in response to type-2 immunity following worm infection. Functionally, this form constitutes the precursor of the pore-forming protein: upon cleavage, the released N-terminal moiety (Gasdermin-C2, N-terminal) binds to membranes and forms pores, triggering pyroptosis. In terms of biological role, pore-forming protein that causes membrane permeabilization and pyroptosis in response to type-2 immunity. Produced by the cleavage of gasdermin-C2 in response to type-2 immunity following worm infection. After cleavage, moves to the plasma membrane where it strongly binds to membrane inner leaflet lipids. Homooligomerizes within the membrane and forms pores of 10-15 nanometers (nm) of inner diameter, triggering pyroptosis and lytic cell death in enterocytes. This is Gasdermin-C2 from Mus musculus (Mouse).